The primary structure comprises 626 residues: Chaperone protein HtpG (626 aa).

Residues 1 to 343 (MHKQTLSFQA…SADLPLNVSR (343 aa)) are a; substrate-binding. Residues 344 to 558 (ELLQESRAVK…DGDMSTQLAR (215 aa)) are b. The tract at residues 559-626 (MLKQAGQAVP…YVKRVNALLV (68 aa)) is c.

The protein belongs to the heat shock protein 90 family. As to quaternary structure, homodimer.

The protein localises to the cytoplasm. Its function is as follows. Molecular chaperone. Has ATPase activity. In Polaromonas sp. (strain JS666 / ATCC BAA-500), this protein is Chaperone protein HtpG.